The sequence spans 197 residues: Outer membrane protein 26 (197 aa).

The signal sequence occupies residues 1-23 (MKNIAKVTALALGIALASGYASA).

It belongs to the Skp family.

It is found in the cell outer membrane. This chain is Outer membrane protein 26 (omp26), found in Haemophilus influenzae (strain ATCC 51907 / DSM 11121 / KW20 / Rd).